The chain runs to 606 residues: Kelch-like protein 41 (606 aa).

S3 is modified (phosphoserine). Residues 33-100 (IDCTLKAGDK…LYSASIDLND (68 aa)) enclose the BTB domain. Residues 135-237 (CLAILRLGLL…AEKYFKDHVE (103 aa)) enclose the BACK domain. Kelch repeat units follow at residues 346 to 398 (QVYV…EVDD), 399 to 447 (KIYV…SHNG), 448 to 495 (MIYC…IHKG), 497 to 542 (IVIA…SLAG), and 544 to 599 (LYAI…TRLN).

As to quaternary structure, interacts with NRAP. Part of a complex that contains CUL3, RBX1 and KLHL41. Interacts with LASP1. Post-translationally, ubiquitinated by E3 ubiquitin ligase complex formed by CUL3 and RBX1 and probably targeted for proteasome-independent degradation. Quinone-induced oxidative stress increases its ubiquitination. In terms of tissue distribution, primarily expressed in skeletal muscle. Also found in heart and lung.

It localises to the cytoplasm. The protein localises to the cytoskeleton. It is found in the cell projection. Its subcellular location is the pseudopodium. The protein resides in the ruffle. It localises to the myofibril. The protein localises to the sarcomere. It is found in the m line. Its subcellular location is the sarcoplasmic reticulum membrane. The protein resides in the endoplasmic reticulum membrane. Involved in skeletal muscle development and differentiation. Regulates proliferation and differentiation of myoblasts and plays a role in myofibril assembly by promoting lateral fusion of adjacent thin fibrils into mature, wide myofibrils. Required for pseudopod elongation in transformed cells. This chain is Kelch-like protein 41 (Klhl41), found in Rattus norvegicus (Rat).